The chain runs to 181 residues: Large ribosomal subunit protein uL5 (181 aa).

Belongs to the universal ribosomal protein uL5 family. In terms of assembly, part of the 50S ribosomal subunit; part of the 5S rRNA/L5/L18/L25 subcomplex. Contacts the 5S rRNA and the P site tRNA. Forms a bridge to the 30S subunit in the 70S ribosome.

This is one of the proteins that bind and probably mediate the attachment of the 5S RNA into the large ribosomal subunit, where it forms part of the central protuberance. In the 70S ribosome it contacts protein S13 of the 30S subunit (bridge B1b), connecting the 2 subunits; this bridge is implicated in subunit movement. Contacts the P site tRNA; the 5S rRNA and some of its associated proteins might help stabilize positioning of ribosome-bound tRNAs. The protein is Large ribosomal subunit protein uL5 of Helicobacter hepaticus (strain ATCC 51449 / 3B1).